The primary structure comprises 342 residues: Trans-3-hydroxy-L-proline dehydratase (342 aa).

Catalysis depends on S90, which acts as the Proton acceptor. Substrate is bound by residues 91–92 (GS), D251, and 256–257 (GT).

Belongs to the proline racemase family.

The enzyme catalyses trans-3-hydroxy-L-proline = 1-pyrroline-2-carboxylate + H2O. Its function is as follows. Catalyzes the dehydration of trans-3-hydroxy-L-proline (t3LHyp) to Delta(1)-pyrroline-2-carboxylate (Pyr2C). Is likely involved in a degradation pathway that converts t3LHyp to L-proline, which would allow P.denitrificans to grow on t3LHyp as a sole carbon source. Displays neither proline racemase activity nor 4-hydroxyproline 2-epimerase activity. This is Trans-3-hydroxy-L-proline dehydratase from Paracoccus denitrificans (strain Pd 1222).